Here is a 275-residue protein sequence, read N- to C-terminus: Large ribosomal subunit protein uL2 (275 aa).

Disordered regions lie at residues 1-20 (MAVK…TTAD) and 214-275 (WLGR…TRRK). The span at 255–275 (KGLKTRRKRKTSDRFIVTRRK) shows a compositional bias: basic residues.

Belongs to the universal ribosomal protein uL2 family. As to quaternary structure, part of the 50S ribosomal subunit. Forms a bridge to the 30S subunit in the 70S ribosome.

One of the primary rRNA binding proteins. Required for association of the 30S and 50S subunits to form the 70S ribosome, for tRNA binding and peptide bond formation. It has been suggested to have peptidyltransferase activity; this is somewhat controversial. Makes several contacts with the 16S rRNA in the 70S ribosome. The sequence is that of Large ribosomal subunit protein uL2 (rplB) from Deinococcus radiodurans (strain ATCC 13939 / DSM 20539 / JCM 16871 / CCUG 27074 / LMG 4051 / NBRC 15346 / NCIMB 9279 / VKM B-1422 / R1).